The primary structure comprises 637 residues: Glutathione hydrolase 3 (637 aa).

A helical membrane pass occupies residues 28–48 (LKISLLLLLILLATSGYYSFS). Asn50 carries N-linked (GlcNAc...) asparagine glycosylation. Arg147 serves as a coordination point for L-glutamate. N-linked (GlcNAc...) asparagine glycans are attached at residues Asn271, Asn374, and Asn398. The Nucleophile role is filled by Thr418. Residues Thr436, Asn438, Glu457, Asp460, 488–489 (SS), and 509–510 (GG) each bind L-glutamate. Asn553 carries an N-linked (GlcNAc...) asparagine glycan.

Belongs to the gamma-glutamyltransferase family. As to expression, expressed in roots, cotyledons, leaves, flowers and siliques.

It localises to the vacuole membrane. The enzyme catalyses an N-terminal (5-L-glutamyl)-[peptide] + an alpha-amino acid = 5-L-glutamyl amino acid + an N-terminal L-alpha-aminoacyl-[peptide]. It carries out the reaction glutathione + H2O = L-cysteinylglycine + L-glutamate. It catalyses the reaction an S-substituted glutathione + H2O = an S-substituted L-cysteinylglycine + L-glutamate. The protein operates within sulfur metabolism; glutathione metabolism. May play a role in protecting plants from some xenobiotic chemicals by degrading vacuolar glutathione conjugates into cysteine conjugates. The chain is Glutathione hydrolase 3 (GGT3) from Arabidopsis thaliana (Mouse-ear cress).